The primary structure comprises 946 residues: Ent-kaur-16-ene synthase (946 aa).

The Mg(2+) site is built by Asp-656, Glu-660, Asn-839, Asp-840, Ser-843, and Asp-847. A DEXXE motif motif is present at residues 656 to 660 (DEFFE).

Belongs to the terpene synthase family. Mg(2+) is required as a cofactor.

It carries out the reaction ent-copalyl diphosphate = ent-kaur-16-ene + diphosphate. It catalyses the reaction (2E,6E,10E)-geranylgeranyl diphosphate = ent-copalyl diphosphate. The protein operates within plant hormone biosynthesis; gibberellin biosynthesis. Its function is as follows. Catalyzes the conversion of geranylgeranyl diphosphate to the gibberellin precursor ent-kaurene diphosphate in a two step process. The polypeptide is Ent-kaur-16-ene synthase (Phaeosphaeria sp. (strain L487)).